The following is a 222-amino-acid chain: N-acetyltransferase 8B (222 aa).

Residues 1 to 42 (MVSYHICEYQDSDYKSVVDVFTKGAEEYIPSTFRHLLLLPRT) lie on the Cytoplasmic side of the membrane. A helical; Signal-anchor for type II membrane protein membrane pass occupies residues 43–67 (LLLLLGVSLALVLVSGSWLLAVVCI). The 156-residue stretch at 62-217 (LAVVCIFFLL…VGIRFVQLNY (156 aa)) folds into the N-acetyltransferase domain. The Lumenal segment spans residues 68–222 (FFLLPFLWFL…VQLNYSFPSA (155 aa)). Lys-99 is subject to N6-acetyllysine.

It belongs to the NAT8 family. Post-translationally, acetylation on Lys-99 modulates enzymatic activity.

The protein localises to the endoplasmic reticulum-Golgi intermediate compartment membrane. It is found in the endoplasmic reticulum membrane. It catalyses the reaction L-lysyl-[protein] + acetyl-CoA = N(6)-acetyl-L-lysyl-[protein] + CoA + H(+). Endoplasmic reticulum (ER)-membrane-bound lysine N-acetyltransferase catalyzing the N6-acetylation of lysine residues in the lumen of the ER in various proteins, including PROM1 and BACE1, using acetyl-CoA as acetyl donor. Thereby, may regulate apoptosis through the acetylation and the regulation of the expression of PROM1. Acetylates and stabilizes BACE1 immature protein, leading to increased steady-state levels in neurons. By acting on BACE1 expression, may regulate amyloid beta-peptide formation. N(6)-lysine acetylation in ER maintains protein homeostasis and regulates reticulophagy. The polypeptide is N-acetyltransferase 8B (Rattus norvegicus (Rat)).